The chain runs to 129 residues: Snaclec coagulation factor IX-binding protein subunit A (129 aa).

Positions 1–129 (DCPSGWSSYE…GQQNPFVCEA (129 aa)) constitute a C-type lectin domain. Disulfide bonds link C2–C13, C30–C127, and C102–C119. Ca(2+) contacts are provided by S41, E43, and E47. E128 lines the Ca(2+) pocket.

It belongs to the snaclec family. In terms of assembly, heterodimer of subunits A and B; disulfide-linked. In terms of tissue distribution, expressed by the venom gland.

The protein localises to the secreted. Its function is as follows. Anticoagulant protein which binds to the gamma-carboxyglutamic acid-domain regions of factor IX (F9) (but not factor X) in the presence of calcium with a 1 to 1 stoichiometry. In Protobothrops flavoviridis (Habu), this protein is Snaclec coagulation factor IX-binding protein subunit A.